We begin with the raw amino-acid sequence, 400 residues long: Elongation factor Tu (400 aa).

The 199-residue stretch at Lys10 to Val208 folds into the tr-type G domain. Positions Gly19–Thr26 are G1. Gly19–Thr26 is a GTP binding site. Thr26 is a Mg(2+) binding site. The tract at residues Gly60–Asn64 is G2. The G3 stretch occupies residues Asp81–Gly84. Residues Asp81–His85 and Asn136–Asp139 contribute to the GTP site. A G4 region spans residues Asn136–Asp139. The tract at residues Ser174–Leu176 is G5.

It belongs to the TRAFAC class translation factor GTPase superfamily. Classic translation factor GTPase family. EF-Tu/EF-1A subfamily. Monomer.

It is found in the cytoplasm. The catalysed reaction is GTP + H2O = GDP + phosphate + H(+). In terms of biological role, GTP hydrolase that promotes the GTP-dependent binding of aminoacyl-tRNA to the A-site of ribosomes during protein biosynthesis. The protein is Elongation factor Tu of Fervidobacterium nodosum (strain ATCC 35602 / DSM 5306 / Rt17-B1).